The sequence spans 162 residues: CD-NTase-associated protein 7 (162 aa).

Residues 138–162 (HSGLTQSGGREYSSNGYGMQRKDYN) form a disordered region. Residues 139-154 (SGLTQSGGREYSSNGY) show a composition bias toward polar residues.

This sequence belongs to the HORMA family. HORMA1 subfamily. In terms of assembly, forms complexes with CdnC with 1:1 and 2:2 stoichimetry, and a 1:1:6 CdnC:Cap7:Cap6 complex.

In terms of biological role, sensor protein of a CBASS antivirus system. CBASS (cyclic oligonucleotide-based antiphage signaling system) provides immunity against bacteriophage. The CD-NTase protein synthesizes cyclic nucleotides in response to infection; these serve as specific second messenger signals. The signals activate a diverse range of effectors, leading to bacterial cell death and thus abortive phage infection. A type III CBASS system. Expression of this CBASS system (Cap18-Cap6-Cap7-CdnC-CapW-Cap17) in a susceptible E.coli (strain MG1655) confers resistance to bacteriophage P1. The sensor protein for this CBASS system. Binds to a closure peptide, which allows it to activate CdnC for second messenger synthesis. This chain is CD-NTase-associated protein 7, found in Escherichia coli (strain KTE188).